Here is a 221-residue protein sequence, read N- to C-terminus: Small ribosomal subunit protein uS2 (221 aa).

Residues 202–221 (KVKMPQQNQRGRPQRRFQRR) are disordered.

Belongs to the universal ribosomal protein uS2 family.

This is Small ribosomal subunit protein uS2 from Methanococcus vannielii (strain ATCC 35089 / DSM 1224 / JCM 13029 / OCM 148 / SB).